The primary structure comprises 390 residues: Alkanesulfonate monooxygenase (390 aa).

The protein belongs to the SsuD family.

It catalyses the reaction an alkanesulfonate + FMNH2 + O2 = an aldehyde + FMN + sulfite + H2O + 2 H(+). Functionally, catalyzes the desulfonation of aliphatic sulfonates. This Cupriavidus taiwanensis (strain DSM 17343 / BCRC 17206 / CCUG 44338 / CIP 107171 / LMG 19424 / R1) (Ralstonia taiwanensis (strain LMG 19424)) protein is Alkanesulfonate monooxygenase.